The chain runs to 170 residues: Lipoprotein signal peptidase (170 aa).

A run of 3 helical transmembrane segments spans residues 12–32 (WYWVVVLVFVADQLSKQWVLS), 67–87 (WQRWLFTFVAVGFSVVLSVWL), and 94–116 (MWRLNLAYTLVIGGALGNLIDRL). Active-site residues include D123 and D141. A helical transmembrane segment spans residues 133 to 153 (HFPAFNIADSAICVGAALIIL).

Belongs to the peptidase A8 family.

It localises to the cell inner membrane. It carries out the reaction Release of signal peptides from bacterial membrane prolipoproteins. Hydrolyzes -Xaa-Yaa-Zaa-|-(S,diacylglyceryl)Cys-, in which Xaa is hydrophobic (preferably Leu), and Yaa (Ala or Ser) and Zaa (Gly or Ala) have small, neutral side chains.. Its pathway is protein modification; lipoprotein biosynthesis (signal peptide cleavage). This protein specifically catalyzes the removal of signal peptides from prolipoproteins. The sequence is that of Lipoprotein signal peptidase from Shewanella halifaxensis (strain HAW-EB4).